The sequence spans 552 residues: Chaperonin GroEL (552 aa).

ATP-binding positions include 30–33 (TLGP), Lys-51, 87–91 (DGTTT), Gly-415, 479–481 (NAA), and Asp-495.

It belongs to the chaperonin (HSP60) family. In terms of assembly, forms a cylinder of 14 subunits composed of two heptameric rings stacked back-to-back. Interacts with the co-chaperonin GroES.

It localises to the cytoplasm. It catalyses the reaction ATP + H2O + a folded polypeptide = ADP + phosphate + an unfolded polypeptide.. In terms of biological role, together with its co-chaperonin GroES, plays an essential role in assisting protein folding. The GroEL-GroES system forms a nano-cage that allows encapsulation of the non-native substrate proteins and provides a physical environment optimized to promote and accelerate protein folding. The chain is Chaperonin GroEL from Stutzerimonas stutzeri (Pseudomonas stutzeri).